The following is a 76-amino-acid chain: Defensin-like protein 125 (76 aa).

A signal peptide spans 1 to 25 (MTKAITLAIFMVVLVLGMVTKETQG). 4 disulfides stabilise this stretch: C30/C74, C41/C60, C46/C68, and C50/C70.

It belongs to the DEFL family.

It is found in the secreted. This is Defensin-like protein 125 (LCR54) from Arabidopsis thaliana (Mouse-ear cress).